The following is a 459-amino-acid chain: Serine--tRNA ligase (459 aa).

Residue 254-256 (TAE) coordinates L-serine. Residues 285 to 287 (RKE) and V301 contribute to the ATP site. Position 308 (E308) interacts with L-serine. Position 372 to 375 (372 to 375 (EMVS)) interacts with ATP. L-serine is bound at residue T408.

The protein belongs to the class-II aminoacyl-tRNA synthetase family. Type-1 seryl-tRNA synthetase subfamily. Homodimer. The tRNA molecule binds across the dimer.

It localises to the cytoplasm. The enzyme catalyses tRNA(Ser) + L-serine + ATP = L-seryl-tRNA(Ser) + AMP + diphosphate + H(+). It catalyses the reaction tRNA(Sec) + L-serine + ATP = L-seryl-tRNA(Sec) + AMP + diphosphate + H(+). It functions in the pathway aminoacyl-tRNA biosynthesis; selenocysteinyl-tRNA(Sec) biosynthesis; L-seryl-tRNA(Sec) from L-serine and tRNA(Sec): step 1/1. In terms of biological role, catalyzes the attachment of serine to tRNA(Ser). Is also able to aminoacylate tRNA(Sec) with serine, to form the misacylated tRNA L-seryl-tRNA(Sec), which will be further converted into selenocysteinyl-tRNA(Sec). This Desulfurococcus amylolyticus (strain DSM 18924 / JCM 16383 / VKM B-2413 / 1221n) (Desulfurococcus kamchatkensis) protein is Serine--tRNA ligase.